The primary structure comprises 218 residues: Small ribosomal subunit protein uS3c (218 aa).

In terms of domain architecture, KH type-2 spans 47-118; that stretch reads VQKNMRISSG…RLNIAITRVA (72 aa).

This sequence belongs to the universal ribosomal protein uS3 family. In terms of assembly, part of the 30S ribosomal subunit.

The protein resides in the plastid. It localises to the chloroplast. In Calycanthus floridus var. glaucus (Eastern sweetshrub), this protein is Small ribosomal subunit protein uS3c (rps3).